The primary structure comprises 443 residues: Tubulin beta chain (443 aa).

Residues Gln11, Glu69, Ser138, Gly142, Thr143, Gly144, Asn204, and Asn226 each coordinate GTP. Glu69 serves as a coordination point for Mg(2+). The interval 424–443 is disordered; sequence QYQDATAEEEGEFEEEEGEN. Residues 429–443 are compositionally biased toward acidic residues; it reads TAEEEGEFEEEEGEN.

The protein belongs to the tubulin family. In terms of assembly, dimer of alpha and beta chains. A typical microtubule is a hollow water-filled tube with an outer diameter of 25 nm and an inner diameter of 15 nM. Alpha-beta heterodimers associate head-to-tail to form protofilaments running lengthwise along the microtubule wall with the beta-tubulin subunit facing the microtubule plus end conferring a structural polarity. Microtubules usually have 13 protofilaments but different protofilament numbers can be found in some organisms and specialized cells. Mg(2+) is required as a cofactor. Post-translationally, some glutamate residues at the C-terminus are either polyglutamylated or polyglycylated. These 2 modifications occur exclusively on glutamate residues and result in either polyglutamate or polyglycine chains on the gamma-carboxyl group. Both modifications can coexist on the same protein on adjacent residues, and lowering polyglycylation levels increases polyglutamylation, and reciprocally. The precise function of such modifications is still unclear but they regulate the assembly and dynamics of axonemal microtubules.

The protein localises to the cytoplasm. The protein resides in the cytoskeleton. Its function is as follows. Tubulin is the major constituent of microtubules, a cylinder consisting of laterally associated linear protofilaments composed of alpha- and beta-tubulin heterodimers. Microtubules grow by the addition of GTP-tubulin dimers to the microtubule end, where a stabilizing cap forms. Below the cap, tubulin dimers are in GDP-bound state, owing to GTPase activity of alpha-tubulin. The protein is Tubulin beta chain (BTU1) of Tetrahymena thermophila.